A 491-amino-acid chain; its full sequence is 2,3-bisphosphoglycerate-independent phosphoglycerate mutase (491 aa).

D11 and S61 together coordinate Mn(2+). The Phosphoserine intermediate role is filled by S61. Substrate contacts are provided by residues H118, 147–148, R177, R183, 247–250, and K320; these read RD and RNDR. Mn(2+)-binding residues include D386, H390, D427, H428, and H445.

The protein belongs to the BPG-independent phosphoglycerate mutase family. Monomer. The cofactor is Mn(2+).

The catalysed reaction is (2R)-2-phosphoglycerate = (2R)-3-phosphoglycerate. It functions in the pathway carbohydrate degradation; glycolysis; pyruvate from D-glyceraldehyde 3-phosphate: step 3/5. Functionally, catalyzes the interconversion of 2-phosphoglycerate and 3-phosphoglycerate. The sequence is that of 2,3-bisphosphoglycerate-independent phosphoglycerate mutase from Helicobacter pylori (strain J99 / ATCC 700824) (Campylobacter pylori J99).